The primary structure comprises 173 residues: Alpha-crystallin A chain (173 aa).

Residue M1 is modified to N-acetylmethionine. The segment at 1–63 (MDIAIQHPWF…RTVLDSGISE (63 aa)) is required for complex formation with BFSP1 and BFSP2. Q6 carries the deamidated glutamine; partial modification. Phosphoserine is present on S45. Q50 carries the deamidated glutamine; partial modification. A sHSP domain is found at 52–162 (LFRTVLDSGI…GHSERAIPVS (111 aa)). K70 carries the N6-acetyllysine modification. The residue at position 90 (Q90) is a Deamidated glutamine; partial. Residue K99 is modified to N6-acetyllysine. H100 contributes to the Zn(2+) binding site. At N101 the chain carries Deamidated asparagine; partial. Zn(2+)-binding residues include E102 and H107. Residue S122 is modified to Phosphoserine. N123 bears the Deamidated asparagine; partial mark. Residues 144 to 173 (PKVPSGMDAGHSERAIPVSREEKPSSAPSS) are disordered. Residues 153-167 (GHSERAIPVSREEKP) show a composition bias toward basic and acidic residues. Residue H154 coordinates Zn(2+). O-linked (GlcNAc) serine glycosylation occurs at S162.

Belongs to the small heat shock protein (HSP20) family. Heteromer composed of three CRYAA and one CRYAB subunits. Inter-subunit bridging via zinc ions enhances stability, which is crucial as there is no protein turn over in the lens. Can also form homodimers and homotetramers (dimers of dimers) which serve as the building blocks of homooligomers. Within homooligomers, the zinc-binding motif is created from residues of 3 different molecules. His-100 and Glu-102 from one molecule are ligands of the zinc ion, and His-107 and His-154 residues from additional molecules complete the site with tetrahedral coordination geometry. Part of a complex required for lens intermediate filament formation composed of BFSP1, BFSP2 and CRYAA. Post-translationally, acetylation at Lys-70 may increase chaperone activity. In terms of processing, undergoes age-dependent proteolytical cleavage at the C-terminus.

The protein resides in the cytoplasm. It localises to the nucleus. In terms of biological role, contributes to the transparency and refractive index of the lens. Acts as a chaperone, preventing aggregation of various proteins under a wide range of stress conditions. Required for the correct formation of lens intermediate filaments as part of a complex composed of BFSP1, BFSP2 and CRYAA. This is Alpha-crystallin A chain (CRYAA) from Balaenoptera acutorostrata (Common minke whale).